A 227-amino-acid polypeptide reads, in one-letter code: Ribonuclease 3 (227 aa).

Positions 6-128 constitute an RNase III domain; that stretch reads ASDYQQRIGY…VIAAIYLDAD (123 aa). Glu41 lines the Mg(2+) pocket. Asp45 is a catalytic residue. Residues Asp114 and Glu117 each contribute to the Mg(2+) site. Residue Glu117 is part of the active site. In terms of domain architecture, DRBM spans 155-225; it reads DPKTRLQEWL…ASHAINQLDS (71 aa). Residues 203 to 212 are compositionally biased toward basic and acidic residues; it reads GEGSSRRLAE. A disordered region spans residues 203-227; that stretch reads GEGSSRRLAEQDAASHAINQLDSNK.

The protein belongs to the ribonuclease III family. In terms of assembly, homodimer. Mg(2+) is required as a cofactor.

The protein localises to the cytoplasm. The catalysed reaction is Endonucleolytic cleavage to 5'-phosphomonoester.. Its function is as follows. Digests double-stranded RNA. Involved in the processing of primary rRNA transcript to yield the immediate precursors to the large and small rRNAs (23S and 16S). Processes some mRNAs, and tRNAs when they are encoded in the rRNA operon. Processes pre-crRNA and tracrRNA of type II CRISPR loci if present in the organism. This is Ribonuclease 3 from Xylella fastidiosa (strain M12).